Here is a 752-residue protein sequence, read N- to C-terminus: Lid2 complex component jmj3 (752 aa).

One can recognise a JmjN domain in the interval I34 to P75. The JmjC domain occupies Y162–L333. Polar residues-rich tracts occupy residues S391–S402 and L409–S423. The segment at S391–E438 is disordered. The segment covering T427–E438 has biased composition (basic and acidic residues).

As to quaternary structure, component of the Lid2 complex composed of ash2, jmj3, lid2, sdc1 and snt2.

Its subcellular location is the nucleus. This Schizosaccharomyces pombe (strain 972 / ATCC 24843) (Fission yeast) protein is Lid2 complex component jmj3.